The chain runs to 210 residues: 7-methyl-GTP pyrophosphatase (210 aa).

Asp-79 acts as the Proton acceptor in catalysis.

The protein belongs to the Maf family. YceF subfamily. It depends on a divalent metal cation as a cofactor.

It localises to the cytoplasm. It catalyses the reaction N(7)-methyl-GTP + H2O = N(7)-methyl-GMP + diphosphate + H(+). Its function is as follows. Nucleoside triphosphate pyrophosphatase that hydrolyzes 7-methyl-GTP (m(7)GTP). May have a dual role in cell division arrest and in preventing the incorporation of modified nucleotides into cellular nucleic acids. The chain is 7-methyl-GTP pyrophosphatase from Burkholderia orbicola (strain AU 1054).